A 297-amino-acid polypeptide reads, in one-letter code: Superoxide dismutase 1 copper chaperone (297 aa).

Position 11 (cysteine 11) interacts with Cu cation. Residues 222–263 (GSSCCSKKDSSPSEKPSCCSQEKKSCCSSKKPSCCSQEKKGC) are disordered. Residues 234–257 (SEKPSCCSQEKKSCCSSKKPSCCS) show a composition bias toward low complexity.

Belongs to the CCS1 family.

It localises to the cytoplasm. In terms of biological role, copper chaperone for superoxide dismutase 1 (sod1). Binds copper ions and delivers them specifically to sod1. Also has a role in cell protection against copper ion toxicity during conditions of copper excess. The C-terminal region is thought to act specifically in this sequestration role. This chain is Superoxide dismutase 1 copper chaperone (ccs1), found in Schizosaccharomyces pombe (strain 972 / ATCC 24843) (Fission yeast).